Here is a 131-residue protein sequence, read N- to C-terminus: D-ribose pyranase (131 aa).

His20 functions as the Proton donor in the catalytic mechanism. Substrate is bound by residues Asp28, His98, and 120 to 122 (FSN).

Belongs to the RbsD / FucU family. RbsD subfamily. In terms of assembly, homodecamer.

The protein resides in the cytoplasm. The enzyme catalyses beta-D-ribopyranose = beta-D-ribofuranose. It participates in carbohydrate metabolism; D-ribose degradation; D-ribose 5-phosphate from beta-D-ribopyranose: step 1/2. Functionally, catalyzes the interconversion of beta-pyran and beta-furan forms of D-ribose. This is D-ribose pyranase from Petrotoga mobilis (strain DSM 10674 / SJ95).